Consider the following 154-residue polypeptide: Myoglobin (154 aa).

Residues 2–148 (GLSDGEWQLV…FRKDIAAKYK (147 aa)) form the Globin domain. Serine 4 bears the Phosphoserine mark. Histidine 65 is a binding site for nitrite. Histidine 65 provides a ligand contact to O2. Phosphothreonine is present on threonine 68. Position 94 (histidine 94) interacts with heme b.

This sequence belongs to the globin family. In terms of assembly, monomeric.

The protein localises to the cytoplasm. Its subcellular location is the sarcoplasm. The enzyme catalyses Fe(III)-heme b-[protein] + nitric oxide + H2O = Fe(II)-heme b-[protein] + nitrite + 2 H(+). It catalyses the reaction H2O2 + AH2 = A + 2 H2O. Its function is as follows. Monomeric heme protein which primary function is to store oxygen and facilitate its diffusion within muscle tissues. Reversibly binds oxygen through a pentacoordinated heme iron and enables its timely and efficient release as needed during periods of heightened demand. Depending on the oxidative conditions of tissues and cells, and in addition to its ability to bind oxygen, it also has a nitrite reductase activity whereby it regulates the production of bioactive nitric oxide. Under stress conditions, like hypoxia and anoxia, it also protects cells against reactive oxygen species thanks to its pseudoperoxidase activity. The sequence is that of Myoglobin (MB) from Globicephala melas (Long-finned pilot whale).